The primary structure comprises 130 residues: Small ribosomal subunit protein uS8 (130 aa).

Belongs to the universal ribosomal protein uS8 family. In terms of assembly, part of the 30S ribosomal subunit. Contacts proteins S5 and S12.

Functionally, one of the primary rRNA binding proteins, it binds directly to 16S rRNA central domain where it helps coordinate assembly of the platform of the 30S subunit. The polypeptide is Small ribosomal subunit protein uS8 (Pseudomonas putida (strain ATCC 700007 / DSM 6899 / JCM 31910 / BCRC 17059 / LMG 24140 / F1)).